The following is an 89-amino-acid chain: Cell division topological specificity factor (89 aa).

The protein belongs to the MinE family.

In terms of biological role, prevents the cell division inhibition by proteins MinC and MinD at internal division sites while permitting inhibition at polar sites. This ensures cell division at the proper site by restricting the formation of a division septum at the midpoint of the long axis of the cell. The sequence is that of Cell division topological specificity factor from Clostridium beijerinckii (strain ATCC 51743 / NCIMB 8052) (Clostridium acetobutylicum).